Reading from the N-terminus, the 424-residue chain is CinA-like protein (424 aa).

It belongs to the CinA family.

The sequence is that of CinA-like protein from Shewanella pealeana (strain ATCC 700345 / ANG-SQ1).